We begin with the raw amino-acid sequence, 437 residues long: Adenylosuccinate synthetase (437 aa).

GTP is bound by residues 25-31 (GDEGKGK), 53-55 (GHT), and Lys62. The active-site Proton acceptor is Asp26. The Mg(2+) site is built by Asp26 and Gly53. Residues 26–29 (DEGK) and 51–54 (NAGH) each bind IMP. The active-site Proton donor is His54. 4 residues coordinate IMP: Thr141, Arg155, Asn232, and Thr247. Residue Thr307 coordinates GTP. 307-313 (TTTKRPR) lines the substrate pocket. Arg311 serves as a coordination point for IMP. GTP-binding positions include Arg313, 339–341 (KLD), and 425–427 (GIG).

This sequence belongs to the adenylosuccinate synthetase family. As to quaternary structure, homodimer. Mg(2+) is required as a cofactor.

Its subcellular location is the cytoplasm. It carries out the reaction IMP + L-aspartate + GTP = N(6)-(1,2-dicarboxyethyl)-AMP + GDP + phosphate + 2 H(+). Its pathway is purine metabolism; AMP biosynthesis via de novo pathway; AMP from IMP: step 1/2. In terms of biological role, plays an important role in the salvage pathway for purine nucleotide biosynthesis. Catalyzes the first committed step in the biosynthesis of AMP from IMP. The polypeptide is Adenylosuccinate synthetase (Plasmodium vivax (strain Salvador I)).